The chain runs to 345 residues: Ferrochelatase (345 aa).

Fe cation contacts are provided by histidine 199 and glutamate 302.

Belongs to the ferrochelatase family.

The protein localises to the cytoplasm. The enzyme catalyses heme b + 2 H(+) = protoporphyrin IX + Fe(2+). Its pathway is porphyrin-containing compound metabolism; protoheme biosynthesis; protoheme from protoporphyrin-IX: step 1/1. In terms of biological role, catalyzes the ferrous insertion into protoporphyrin IX. This is Ferrochelatase from Porphyromonas gingivalis (strain ATCC 33277 / DSM 20709 / CIP 103683 / JCM 12257 / NCTC 11834 / 2561).